The chain runs to 249 residues: Coproheme decarboxylase (249 aa).

Fe-coproporphyrin III-binding positions include Arg131, 145–149 (YPMNK), His172, and Gln185. Tyr145 is an active-site residue.

Belongs to the ChdC family. Type 1 subfamily. Fe-coproporphyrin III serves as cofactor.

The enzyme catalyses Fe-coproporphyrin III + 2 H2O2 + 2 H(+) = heme b + 2 CO2 + 4 H2O. It carries out the reaction Fe-coproporphyrin III + H2O2 + H(+) = harderoheme III + CO2 + 2 H2O. The catalysed reaction is harderoheme III + H2O2 + H(+) = heme b + CO2 + 2 H2O. Its pathway is porphyrin-containing compound metabolism; protoheme biosynthesis. Involved in coproporphyrin-dependent heme b biosynthesis. Catalyzes the decarboxylation of Fe-coproporphyrin III (coproheme) to heme b (protoheme IX), the last step of the pathway. The reaction occurs in a stepwise manner with a three-propionate intermediate. The protein is Coproheme decarboxylase of Staphylococcus carnosus (strain TM300).